The following is a 405-amino-acid chain: Tyrosine--tRNA ligase (405 aa).

An L-tyrosine-binding site is contributed by Y35. The 'HIGH' region signature appears at 40 to 49 (TTSSSLHIGH). The L-tyrosine site is built by Y166 and Q170. The 'KMSKS' region signature appears at 226 to 230 (KMGKS). K229 is a binding site for ATP. The 65-residue stretch at 340–404 (ILLIDLMLDS…VGKKKFLRIV (65 aa)) folds into the S4 RNA-binding domain.

This sequence belongs to the class-I aminoacyl-tRNA synthetase family. TyrS type 1 subfamily. As to quaternary structure, homodimer.

Its subcellular location is the cytoplasm. The catalysed reaction is tRNA(Tyr) + L-tyrosine + ATP = L-tyrosyl-tRNA(Tyr) + AMP + diphosphate + H(+). In terms of biological role, catalyzes the attachment of tyrosine to tRNA(Tyr) in a two-step reaction: tyrosine is first activated by ATP to form Tyr-AMP and then transferred to the acceptor end of tRNA(Tyr). This is Tyrosine--tRNA ligase from Borrelia garinii subsp. bavariensis (strain ATCC BAA-2496 / DSM 23469 / PBi) (Borreliella bavariensis).